Reading from the N-terminus, the 269-residue chain is Small ribosomal subunit protein uS2 (269 aa).

The disordered stretch occupies residues 228–269 (QLDSDDDYEEFDESLAEGDYDDYDEEEDEDSETVSSQEGEEE). The span at 230–269 (DSDDDYEEFDESLAEGDYDDYDEEEDEDSETVSSQEGEEE) shows a compositional bias: acidic residues.

Belongs to the universal ribosomal protein uS2 family.

The protein is Small ribosomal subunit protein uS2 of Crocosphaera subtropica (strain ATCC 51142 / BH68) (Cyanothece sp. (strain ATCC 51142)).